A 173-amino-acid polypeptide reads, in one-letter code: MDIAIQHPWFKRTLGPFYPSRLFDQFFGEGLFEYDLLPFLSSTISPYYRQSLFRTVLDSGISEVRSDRDKFVIFLDVKHFSPEDLTVKVQEDFVEIHGKHNERQDDHGYISREFHRRYRLPSNVDQSALSCSLSADGMLTFSGPKIPSGVDAGHSERAIPVSREEKPSSAPSS.

Met-1 is modified (N-acetylmethionine). A required for complex formation with BFSP1 and BFSP2 region spans residues 1 to 63 (MDIAIQHPWF…RTVLDSGISE (63 aa)). Gln-6 is subject to Deamidated glutamine; partial. N-linked (Glc) (glycation) lysine glycosylation occurs at Lys-11. At Ser-45 the chain carries Phosphoserine. Gln-50 carries the post-translational modification Deamidated glutamine; partial. The 111-residue stretch at 52–162 (LFRTVLDSGI…GHSERAIPVS (111 aa)) folds into the sHSP domain. An N6-acetyllysine modification is found at Lys-70. Lys-78 is a glycosylation site (N-linked (Glc) (glycation) lysine). Gln-90 carries the deamidated glutamine; partial modification. An N6-acetyllysine modification is found at Lys-99. Residue His-100 participates in Zn(2+) binding. Asn-101 carries the post-translational modification Deamidated asparagine; partial. Glu-102 and His-107 together coordinate Zn(2+). Residue Ser-122 is modified to Phosphoserine. Deamidated asparagine; partial is present on Asn-123. The disordered stretch occupies residues 144–173 (PKIPSGVDAGHSERAIPVSREEKPSSAPSS). Residues 153 to 167 (GHSERAIPVSREEKP) show a composition bias toward basic and acidic residues. Residue His-154 participates in Zn(2+) binding. Residues 157 to 163 (RAIPVSR) are important for oligomerization. O-linked (GlcNAc) serine glycosylation occurs at Ser-162.

Belongs to the small heat shock protein (HSP20) family. As to quaternary structure, heteromer composed of three CRYAA and one CRYAB subunits. Inter-subunit bridging via zinc ions enhances stability, which is crucial as there is no protein turn over in the lens. Can also form homodimers and homotetramers (dimers of dimers) which serve as the building blocks of homooligomers. Within homooligomers, the zinc-binding motif is created from residues of 3 different molecules. His-100 and Glu-102 from one molecule are ligands of the zinc ion, and His-107 and His-154 residues from additional molecules complete the site with tetrahedral coordination geometry. Part of a complex required for lens intermediate filament formation composed of BFSP1, BFSP2 and CRYAA. Acetylation at Lys-70 may increase chaperone activity. Post-translationally, undergoes age-dependent proteolytical cleavage at the C-terminus.

Its subcellular location is the cytoplasm. The protein localises to the nucleus. Contributes to the transparency and refractive index of the lens. Acts as a chaperone, preventing aggregation of various proteins under a wide range of stress conditions. Required for the correct formation of lens intermediate filaments as part of a complex composed of BFSP1, BFSP2 and CRYAA. The protein is Alpha-crystallin A chain (CRYAA) of Bos taurus (Bovine).